A 164-amino-acid chain; its full sequence is 3-isopropylmalate dehydratase small subunit (164 aa).

It belongs to the LeuD family. LeuD type 2 subfamily. Heterodimer of LeuC and LeuD.

The enzyme catalyses (2R,3S)-3-isopropylmalate = (2S)-2-isopropylmalate. It functions in the pathway amino-acid biosynthesis; L-leucine biosynthesis; L-leucine from 3-methyl-2-oxobutanoate: step 2/4. In terms of biological role, catalyzes the isomerization between 2-isopropylmalate and 3-isopropylmalate, via the formation of 2-isopropylmaleate. This is 3-isopropylmalate dehydratase small subunit from Syntrophus aciditrophicus (strain SB).